The sequence spans 439 residues: 3-phosphoshikimate 1-carboxyvinyltransferase (439 aa).

3-phosphoshikimate is bound by residues Lys-27, Ser-28, and Arg-32. Lys-27 serves as a coordination point for phosphoenolpyruvate. Phosphoenolpyruvate-binding residues include Gly-101 and Arg-130. The 3-phosphoshikimate site is built by Ser-175, Gln-177, Asp-326, and Lys-353. A phosphoenolpyruvate-binding site is contributed by Gln-177. Asp-326 functions as the Proton acceptor in the catalytic mechanism. Phosphoenolpyruvate-binding residues include Arg-357 and Arg-399.

The protein belongs to the EPSP synthase family. Monomer.

Its subcellular location is the cytoplasm. It carries out the reaction 3-phosphoshikimate + phosphoenolpyruvate = 5-O-(1-carboxyvinyl)-3-phosphoshikimate + phosphate. It participates in metabolic intermediate biosynthesis; chorismate biosynthesis; chorismate from D-erythrose 4-phosphate and phosphoenolpyruvate: step 6/7. Catalyzes the transfer of the enolpyruvyl moiety of phosphoenolpyruvate (PEP) to the 5-hydroxyl of shikimate-3-phosphate (S3P) to produce enolpyruvyl shikimate-3-phosphate and inorganic phosphate. This chain is 3-phosphoshikimate 1-carboxyvinyltransferase, found in Synechococcus sp. (strain CC9311).